A 644-amino-acid polypeptide reads, in one-letter code: Phosphomethylpyrimidine synthase (644 aa).

Residues asparagine 236, methionine 265, tyrosine 294, histidine 330, 350–352, 391–394, and glutamate 430 contribute to the substrate site; these read SRG and DGLR. A Zn(2+)-binding site is contributed by histidine 434. Residue tyrosine 457 coordinates substrate. A Zn(2+)-binding site is contributed by histidine 498. The [4Fe-4S] cluster site is built by cysteine 578, cysteine 581, and cysteine 586. Residues 623–644 form a disordered region; sequence RQKSEEFKASGSELYHPAVEAE.

The protein belongs to the ThiC family. In terms of assembly, homodimer. The cofactor is [4Fe-4S] cluster.

It catalyses the reaction 5-amino-1-(5-phospho-beta-D-ribosyl)imidazole + S-adenosyl-L-methionine = 4-amino-2-methyl-5-(phosphooxymethyl)pyrimidine + CO + 5'-deoxyadenosine + formate + L-methionine + 3 H(+). Its pathway is cofactor biosynthesis; thiamine diphosphate biosynthesis. Functionally, catalyzes the synthesis of the hydroxymethylpyrimidine phosphate (HMP-P) moiety of thiamine from aminoimidazole ribotide (AIR) in a radical S-adenosyl-L-methionine (SAM)-dependent reaction. The chain is Phosphomethylpyrimidine synthase from Aliivibrio fischeri (strain MJ11) (Vibrio fischeri).